Consider the following 246-residue polypeptide: tRNA (guanine-N(7)-)-methyltransferase (246 aa).

Residues Glu-77, Glu-102, Asp-129, and Asp-152 each coordinate S-adenosyl-L-methionine. Asp-152 is a catalytic residue. Substrate-binding positions include Lys-156, Asp-188, and 225-228; that span reads TKFE.

It belongs to the class I-like SAM-binding methyltransferase superfamily. TrmB family.

It catalyses the reaction guanosine(46) in tRNA + S-adenosyl-L-methionine = N(7)-methylguanosine(46) in tRNA + S-adenosyl-L-homocysteine. It participates in tRNA modification; N(7)-methylguanine-tRNA biosynthesis. Its function is as follows. Catalyzes the formation of N(7)-methylguanine at position 46 (m7G46) in tRNA. This is tRNA (guanine-N(7)-)-methyltransferase from Haemophilus influenzae (strain PittEE).